Here is a 141-residue protein sequence, read N- to C-terminus: Nucleoside diphosphate kinase (141 aa).

Positions 11, 59, 87, 93, 104, and 114 each coordinate ATP. The active-site Pros-phosphohistidine intermediate is histidine 117.

It belongs to the NDK family. In terms of assembly, homotetramer. The cofactor is Mg(2+).

It is found in the cytoplasm. The catalysed reaction is a 2'-deoxyribonucleoside 5'-diphosphate + ATP = a 2'-deoxyribonucleoside 5'-triphosphate + ADP. It carries out the reaction a ribonucleoside 5'-diphosphate + ATP = a ribonucleoside 5'-triphosphate + ADP. Its function is as follows. Major role in the synthesis of nucleoside triphosphates other than ATP. The ATP gamma phosphate is transferred to the NDP beta phosphate via a ping-pong mechanism, using a phosphorylated active-site intermediate. The polypeptide is Nucleoside diphosphate kinase (Leptothrix cholodnii (strain ATCC 51168 / LMG 8142 / SP-6) (Leptothrix discophora (strain SP-6))).